We begin with the raw amino-acid sequence, 141 residues long: Nucleoside diphosphate kinase (141 aa).

ATP-binding residues include Lys11, Phe59, Arg87, Thr93, Arg104, and Asn114. His117 functions as the Pros-phosphohistidine intermediate in the catalytic mechanism.

It belongs to the NDK family. Homotetramer. Mg(2+) is required as a cofactor.

The protein localises to the cytoplasm. The catalysed reaction is a 2'-deoxyribonucleoside 5'-diphosphate + ATP = a 2'-deoxyribonucleoside 5'-triphosphate + ADP. It catalyses the reaction a ribonucleoside 5'-diphosphate + ATP = a ribonucleoside 5'-triphosphate + ADP. Functionally, major role in the synthesis of nucleoside triphosphates other than ATP. The ATP gamma phosphate is transferred to the NDP beta phosphate via a ping-pong mechanism, using a phosphorylated active-site intermediate. This is Nucleoside diphosphate kinase from Vibrio vulnificus (strain CMCP6).